A 130-amino-acid chain; its full sequence is Small ribosomal subunit protein uS9 (130 aa).

It belongs to the universal ribosomal protein uS9 family.

In Colwellia psychrerythraea (strain 34H / ATCC BAA-681) (Vibrio psychroerythus), this protein is Small ribosomal subunit protein uS9.